We begin with the raw amino-acid sequence, 321 residues long: tRNA uridine(34) hydroxylase (321 aa).

In terms of domain architecture, Rhodanese spans 135–233; that stretch reads DDPDTLVIDT…YLEQVPEEES (99 aa). Cys-193 acts as the Cysteine persulfide intermediate in catalysis. Positions 301 to 321 are disordered; sequence RQRQMDQLSSASSKKSDDFSL.

The protein belongs to the TrhO family.

It carries out the reaction uridine(34) in tRNA + AH2 + O2 = 5-hydroxyuridine(34) in tRNA + A + H2O. Functionally, catalyzes oxygen-dependent 5-hydroxyuridine (ho5U) modification at position 34 in tRNAs. In Parasynechococcus marenigrum (strain WH8102), this protein is tRNA uridine(34) hydroxylase.